A 495-amino-acid chain; its full sequence is Trimethylamine methyltransferase MttB (495 aa).

Residue Pyl334 is a non-standard amino acid, pyrrolysine.

This sequence belongs to the trimethylamine methyltransferase family. Can form a complex with MttC.

It catalyses the reaction Co(I)-[trimethylamine-specific corrinoid protein] + trimethylamine + H(+) = methyl-Co(III)-[trimethylamine-specific corrinoid protein] + dimethylamine. It participates in one-carbon metabolism; methanogenesis from trimethylamine. Its function is as follows. Catalyzes the transfer of a methyl group from trimethylamine to the corrinoid cofactor of MttC. The polypeptide is Trimethylamine methyltransferase MttB (Methanosarcina barkeri).